The sequence spans 294 residues: Cytidine deaminase (294 aa).

CMP/dCMP-type deaminase domains are found at residues 48–168 (DEDA…FGPK) and 186–294 (LTGD…VLLG). 89-91 (NME) contributes to the substrate binding site. Zn(2+) is bound at residue histidine 102. Glutamate 104 acts as the Proton donor in catalysis. 2 residues coordinate Zn(2+): cysteine 129 and cysteine 132.

The protein belongs to the cytidine and deoxycytidylate deaminase family. As to quaternary structure, homodimer. Requires Zn(2+) as cofactor.

The enzyme catalyses cytidine + H2O + H(+) = uridine + NH4(+). The catalysed reaction is 2'-deoxycytidine + H2O + H(+) = 2'-deoxyuridine + NH4(+). In terms of biological role, this enzyme scavenges exogenous and endogenous cytidine and 2'-deoxycytidine for UMP synthesis. The sequence is that of Cytidine deaminase from Salmonella newport (strain SL254).